The chain runs to 206 residues: ATP-dependent Clp protease proteolytic subunit 1 (206 aa).

Ser-106 acts as the Nucleophile in catalysis. The active site involves His-131.

It belongs to the peptidase S14 family. Fourteen ClpP subunits assemble into 2 heptameric rings which stack back to back to give a disk-like structure with a central cavity, resembling the structure of eukaryotic proteasomes.

It is found in the cytoplasm. The catalysed reaction is Hydrolysis of proteins to small peptides in the presence of ATP and magnesium. alpha-casein is the usual test substrate. In the absence of ATP, only oligopeptides shorter than five residues are hydrolyzed (such as succinyl-Leu-Tyr-|-NHMec, and Leu-Tyr-Leu-|-Tyr-Trp, in which cleavage of the -Tyr-|-Leu- and -Tyr-|-Trp bonds also occurs).. In terms of biological role, cleaves peptides in various proteins in a process that requires ATP hydrolysis. Has a chymotrypsin-like activity. Plays a major role in the degradation of misfolded proteins. The protein is ATP-dependent Clp protease proteolytic subunit 1 of Methylococcus capsulatus (strain ATCC 33009 / NCIMB 11132 / Bath).